The chain runs to 316 residues: Succinoglycan biosynthesis protein ExoV (316 aa).

It participates in glycan metabolism; exopolysaccharide biosynthesis. The protein is Succinoglycan biosynthesis protein ExoV (exoV) of Rhizobium meliloti (strain 1021) (Ensifer meliloti).